The chain runs to 303 residues: Ribosomal protein L11 methyltransferase (303 aa).

S-adenosyl-L-methionine is bound by residues T152, G173, D195, and N239.

It belongs to the methyltransferase superfamily. PrmA family.

Its subcellular location is the cytoplasm. The catalysed reaction is L-lysyl-[protein] + 3 S-adenosyl-L-methionine = N(6),N(6),N(6)-trimethyl-L-lysyl-[protein] + 3 S-adenosyl-L-homocysteine + 3 H(+). Functionally, methylates ribosomal protein L11. This is Ribosomal protein L11 methyltransferase from Desulforapulum autotrophicum (strain ATCC 43914 / DSM 3382 / VKM B-1955 / HRM2) (Desulfobacterium autotrophicum).